The following is a 585-amino-acid chain: Glycerol-3-phosphate acyltransferase 1 (585 aa).

3 consecutive transmembrane segments (helical) span residues 126 to 146, 334 to 354, and 356 to 376; these read FFPY…AILL, TPLA…LAVF, and ISVG…MSGV. The HXXXXD motif motif lies at 403-408; it reads HRTLLD.

This sequence belongs to the GPAT/DAPAT family. Highly expressed in developing siliques and flower buds. Weakly or not expressed in roots, seedlings and leaves.

Its subcellular location is the membrane. The protein localises to the mitochondrion. The catalysed reaction is sn-glycerol 3-phosphate + an acyl-CoA = a 1-acyl-sn-glycero-3-phosphate + CoA. It functions in the pathway phospholipid metabolism; CDP-diacylglycerol biosynthesis; CDP-diacylglycerol from sn-glycerol 3-phosphate: step 1/3. Functionally, esterifies acyl-group from acyl-ACP to the sn-1 position of glycerol-3-phosphate, an essential step in glycerolipid biosynthesis. Involved in pollen development, by being required for tapetum differentiation and male fertility. In addition to the sporophytic effect, it also exerts a gametophytic effect on pollen performance. This chain is Glycerol-3-phosphate acyltransferase 1 (GPAT1), found in Arabidopsis thaliana (Mouse-ear cress).